The following is a 119-amino-acid chain: Small ribosomal subunit protein uS13 (119 aa).

A disordered region spans residues 92 to 119; sequence RRGLPVRGQQTQTNARTRKGPRRGPASR.

The protein belongs to the universal ribosomal protein uS13 family. Part of the 30S ribosomal subunit. Forms a loose heterodimer with protein S19. Forms two bridges to the 50S subunit in the 70S ribosome.

Its function is as follows. Located at the top of the head of the 30S subunit, it contacts several helices of the 16S rRNA. In the 70S ribosome it contacts the 23S rRNA (bridge B1a) and protein L5 of the 50S subunit (bridge B1b), connecting the 2 subunits; these bridges are implicated in subunit movement. Contacts the tRNAs in the A and P-sites. The protein is Small ribosomal subunit protein uS13 of Halorhodospira halophila (strain DSM 244 / SL1) (Ectothiorhodospira halophila (strain DSM 244 / SL1)).